Here is a 428-residue protein sequence, read N- to C-terminus: C4-dicarboxylate transport protein (428 aa).

Transmembrane regions (helical) follow at residues 8-28 (SLYFQVLTAIAIGILLGHFYP), 44-64 (LIKMIIAPVIFCTVVTGIAGM), 76-96 (VALLYFEIVSTIALIIGLIIV), 142-162 (IGAFASGNILQVLLFAVLFGF), 184-204 (VIFGIINMIMRLAPIGAFGAM), 222-242 (LIICFYITCILFVVLVLGSIA), 326-346 (IVHQITLLIVLLLSSKGAAGV), and 352-372 (IVLAATLSAVGHLPVAGLALI).

Belongs to the dicarboxylate/amino acid:cation symporter (DAACS) (TC 2.A.23) family.

It is found in the cell inner membrane. In terms of biological role, responsible for the transport of dicarboxylates such as succinate, fumarate, and malate from the periplasm across the membrane. This is C4-dicarboxylate transport protein from Escherichia coli O127:H6 (strain E2348/69 / EPEC).